A 210-amino-acid polypeptide reads, in one-letter code: Uracil phosphoribosyltransferase (210 aa).

5-phospho-alpha-D-ribose 1-diphosphate contacts are provided by residues arginine 78, arginine 103, and 130–138; that span reads DPMLATGGT. Residues isoleucine 193 and 198 to 200 each bind uracil; that span reads GDA. A 5-phospho-alpha-D-ribose 1-diphosphate-binding site is contributed by aspartate 199.

This sequence belongs to the UPRTase family. It depends on Mg(2+) as a cofactor.

The catalysed reaction is UMP + diphosphate = 5-phospho-alpha-D-ribose 1-diphosphate + uracil. It functions in the pathway pyrimidine metabolism; UMP biosynthesis via salvage pathway; UMP from uracil: step 1/1. Allosterically activated by GTP. Catalyzes the conversion of uracil and 5-phospho-alpha-D-ribose 1-diphosphate (PRPP) to UMP and diphosphate. The protein is Uracil phosphoribosyltransferase of Xanthomonas campestris pv. campestris (strain 8004).